We begin with the raw amino-acid sequence, 256 residues long: Omega-amidase YafV (256 aa).

The CN hydrolase domain maps to 4–234; the sequence is LKLTLLQQPL…AAQLDAELSL (231 aa). Catalysis depends on glutamate 42, which acts as the Proton acceptor. Residue lysine 107 is part of the active site. Residue cysteine 141 is the Nucleophile of the active site.

It belongs to the carbon-nitrogen hydrolase superfamily. NIT1/NIT2 family.

The catalysed reaction is a monoamide of a dicarboxylate + H2O = a dicarboxylate + NH4(+). Hydrolyzes alpha-ketoglutaramate (a-KGM) to alpha-ketoglutarate (alpha-KG) and ammonia (specific activity 21 umol/min/mg), has very weak activity on L-glutamine, and no activity on deaminated glutathione (dGSH) or glutathione. May function as a metabolite repair enzyme. The protein is Omega-amidase YafV of Yersinia enterocolitica.